The chain runs to 361 residues: Queuine tRNA-ribosyltransferase (361 aa).

The active-site Proton acceptor is Asp-92. Substrate is bound by residues 92 to 96 (DSGGF), Asp-146, Gln-189, and Gly-216. The segment at 247 to 253 (GVGKPVD) is RNA binding. Catalysis depends on Asp-266, which acts as the Nucleophile. The interval 271–275 (TRSGR) is RNA binding; important for wobble base 34 recognition. Cys-304, Cys-306, Cys-309, and His-335 together coordinate Zn(2+).

It belongs to the queuine tRNA-ribosyltransferase family. Homodimer. Within each dimer, one monomer is responsible for RNA recognition and catalysis, while the other monomer binds to the replacement base PreQ1. Zn(2+) is required as a cofactor.

It carries out the reaction 7-aminomethyl-7-carbaguanine + guanosine(34) in tRNA = 7-aminomethyl-7-carbaguanosine(34) in tRNA + guanine. It participates in tRNA modification; tRNA-queuosine biosynthesis. Its function is as follows. Catalyzes the base-exchange of a guanine (G) residue with the queuine precursor 7-aminomethyl-7-deazaguanine (PreQ1) at position 34 (anticodon wobble position) in tRNAs with GU(N) anticodons (tRNA-Asp, -Asn, -His and -Tyr). Catalysis occurs through a double-displacement mechanism. The nucleophile active site attacks the C1' of nucleotide 34 to detach the guanine base from the RNA, forming a covalent enzyme-RNA intermediate. The proton acceptor active site deprotonates the incoming PreQ1, allowing a nucleophilic attack on the C1' of the ribose to form the product. After dissociation, two additional enzymatic reactions on the tRNA convert PreQ1 to queuine (Q), resulting in the hypermodified nucleoside queuosine (7-(((4,5-cis-dihydroxy-2-cyclopenten-1-yl)amino)methyl)-7-deazaguanosine). The polypeptide is Queuine tRNA-ribosyltransferase (Rickettsia africae (strain ESF-5)).